Consider the following 410-residue polypeptide: Lissencephaly-1 homolog B (410 aa).

Residues 7–39 form the LisH domain; that stretch reads QRDELNRAIADYLRSNGYEEAYSTFKKEAELDV. The stretch at 56 to 82 forms a coiled coil; that stretch reads TSVIRLQKKVMELESKLNEAKEEITLG. WD repeat units follow at residues 106 to 147, 148 to 187, 190 to 229, 232 to 271, 274 to 333, 336 to 377, and 379 to 410; these read GHRS…RTLK, GHTD…CIRT, GHDH…CVKT, GHRE…CKAE, EHEH…CLMT, GHDN…KTLS, and HEHF…WECR.

This sequence belongs to the WD repeat LIS1/nudF family. As to quaternary structure, can self-associate. Component of the cytosolic PAF-AH (I) heterotetrameric enzyme, which is composed of PAFAH1B1 (beta), PAFAH1B2 (alpha2) and PAFAH1B3 (alpha1) subunits. The catalytic activity of the enzyme resides in the alpha1 (PAFAH1B3) and alpha2 (PAFAH1B2) subunits, whereas the beta subunit (PAFAH1B1) has regulatory activity. Trimer formation is not essential for the catalytic activity. Interacts with dynein, dynactin, nde1 and ndel1. As to expression, enriched in the photoreceptor cell layer.

The protein resides in the cytoplasm. The protein localises to the cytoskeleton. It localises to the microtubule organizing center. Its subcellular location is the centrosome. In terms of biological role, regulatory subunit (beta subunit) of the cytosolic type I platelet-activating factor (PAF) acetylhydrolase (PAF-AH (I)), an enzyme that catalyzes the hydrolyze of the acetyl group at the sn-2 position of PAF and its analogs and participates in the PAF inactivation. Regulates the PAF-AH (I) activity in a catalytic dimer composition-dependent manner. Positively regulates the activity of the minus-end directed microtubule motor protein dynein. May enhance dynein-mediated microtubule sliding by targeting dynein to the microtubule plus end. Required for several dynein- and microtubule-dependent processes such as the maintenance of Golgi integrity, the peripheral transport of microtubule fragments and the coupling of the nucleus and centrosome. May be required for proliferation of neuronal precursors and neuronal migration. Involved in the positioning of nuclei in photoreceptor cells. The protein is Lissencephaly-1 homolog B (pafah1b1b) of Danio rerio (Zebrafish).